We begin with the raw amino-acid sequence, 293 residues long: Inhibitory synaptic factor 1 (293 aa).

Positions 1–26 (MNIRGAPDLGQPSDDPSSGGERERIR) are disordered. Residues 30 to 63 (KMVIGQLEGILRELKEVAKELREVVSQIDKLTSD) adopt a coiled-coil conformation. 2 disordered regions span residues 120–186 (TPSD…RERV) and 200–293 (DDEE…RGKN). Positions 171–180 (VKSQLPQRTP) are enriched in polar residues. Residues 200 to 215 (DDEEGDGEQEVEEEEV) show a composition bias toward acidic residues. Polar residues-rich tracts occupy residues 243–256 (SPLT…TLAP) and 264–286 (RNSS…TATR).

It belongs to the INSYN1 family. As to quaternary structure, interacts with GPHN.

The protein localises to the postsynaptic density. Its function is as follows. Component of the protein machinery at the inhibitory synapses, probably acting as a scaffold. Inhibitory synapses dampen neuronal activity through postsynaptic hyperpolarization. This synaptic inhibition is fundamental for the functioning of the central nervous system, shaping and orchestrating the flow of information through neuronal networks to generate a precise neural code. The polypeptide is Inhibitory synaptic factor 1 (Homo sapiens (Human)).